The sequence spans 1394 residues: DNA-directed RNA polymerase subunit beta' (1394 aa).

Zn(2+)-binding residues include Cys-70, Cys-72, Cys-85, and Cys-88. Mg(2+) contacts are provided by Asp-470, Asp-472, and Asp-474. Zn(2+) is bound by residues Cys-815, Cys-889, Cys-896, and Cys-899.

This sequence belongs to the RNA polymerase beta' chain family. The RNAP catalytic core consists of 2 alpha, 1 beta, 1 beta' and 1 omega subunit. When a sigma factor is associated with the core the holoenzyme is formed, which can initiate transcription. Mg(2+) is required as a cofactor. Zn(2+) serves as cofactor.

It catalyses the reaction RNA(n) + a ribonucleoside 5'-triphosphate = RNA(n+1) + diphosphate. Its function is as follows. DNA-dependent RNA polymerase catalyzes the transcription of DNA into RNA using the four ribonucleoside triphosphates as substrates. This chain is DNA-directed RNA polymerase subunit beta', found in Anaeromyxobacter sp. (strain K).